A 342-amino-acid polypeptide reads, in one-letter code: Replication factor C subunit 3 (342 aa).

63–70 contributes to the ATP binding site; sequence GPPGTGKT.

Belongs to the activator 1 small subunits family. Heteropentamer of subunits rfc1, rfc2, rfc3, rfc4 and rfc5 that forms a complex (RFC) with PCNA in the presence of ATP. Two other complexes exist where rfc1 can be replaced by either ctf18 or elg1 to form the ctf18-RFC or the elg1-RFC complexes respectively.

The protein resides in the nucleus. Functionally, the elongation of primed DNA templates by DNA polymerase delta and epsilon requires the action of the accessory proteins PCNA and activator 1. Subunit 3 binds ATP. Also involved in replication and DNA damage checkpoint controls, probably functioning as a checkpoint sensor. This Schizosaccharomyces pombe (strain 972 / ATCC 24843) (Fission yeast) protein is Replication factor C subunit 3 (rfc3).